A 268-amino-acid chain; its full sequence is Ribosomal RNA large subunit methyltransferase E (268 aa).

S-adenosyl-L-methionine is bound by residues Gly-50, Trp-52, Asp-68, Asp-84, and Asp-109. Lys-149 (proton acceptor) is an active-site residue. The region spanning 196-254 is the TRAM domain; it reads PLRKGDKFVVDIEKLGSSGDGAVLIEGFVVFVKEVEVGEKVRIKISDVKPNFAFADVEE.

This sequence belongs to the class I-like SAM-binding methyltransferase superfamily. RNA methyltransferase RlmE family.

It localises to the cytoplasm. The catalysed reaction is uridine(2552) in 23S rRNA + S-adenosyl-L-methionine = 2'-O-methyluridine(2552) in 23S rRNA + S-adenosyl-L-homocysteine + H(+). In terms of biological role, specifically methylates the uridine in position 2552 of 23S rRNA at the 2'-O position of the ribose in the fully assembled 50S ribosomal subunit. The polypeptide is Ribosomal RNA large subunit methyltransferase E (Methanosarcina mazei (strain ATCC BAA-159 / DSM 3647 / Goe1 / Go1 / JCM 11833 / OCM 88) (Methanosarcina frisia)).